We begin with the raw amino-acid sequence, 224 residues long: Metalloproteinase inhibitor 4 (224 aa).

The N-terminal stretch at 1 to 29 (MPQSPRPVPSWALLLRLLALLRPPGLGEA) is a signal peptide. Cysteine 30 is a binding site for Zn(2+). 2 involved in metalloproteinase-binding regions span residues 30–33 (CSCA) and 99–100 (SS). Intrachain disulfides connect cysteine 30–cysteine 102, cysteine 32–cysteine 131, cysteine 42–cysteine 156, cysteine 158–cysteine 205, cysteine 163–cysteine 168, and cysteine 176–cysteine 197. One can recognise an NTR domain in the interval 30–156 (CSCAPAHPQQ…SLNHHYHLNC (127 aa)).

The protein belongs to the protease inhibitor I35 (TIMP) family.

It localises to the secreted. Functionally, complexes with metalloproteinases (such as collagenases) and irreversibly inactivates them by binding to their catalytic zinc cofactor. This is Metalloproteinase inhibitor 4 (TIMP4) from Bos taurus (Bovine).